A 182-amino-acid chain; its full sequence is Large ribosomal subunit protein uL6 (182 aa).

It belongs to the universal ribosomal protein uL6 family. In terms of assembly, part of the 50S ribosomal subunit.

Its function is as follows. This protein binds to the 23S rRNA, and is important in its secondary structure. It is located near the subunit interface in the base of the L7/L12 stalk, and near the tRNA binding site of the peptidyltransferase center. This Aeropyrum pernix (strain ATCC 700893 / DSM 11879 / JCM 9820 / NBRC 100138 / K1) protein is Large ribosomal subunit protein uL6.